Here is a 610-residue protein sequence, read N- to C-terminus: ABC transporter ATP-binding protein ARB1 (610 aa).

Residues 1–43 form a disordered region; sequence MPPVSASKAKRDAKKAEREAKKAAAGKTIRKLGRKKEAAAEES. Ser-43 and Ser-65 each carry phosphoserine. ABC transporter domains are found at residues 82–323 and 393–610; these read IKLS…TNQM and LAFD…NVVL. 114–121 is an ATP binding site; it reads GENGCGKS. Residue Ser-196 is modified to Phosphoserine. 428–435 is an ATP binding site; sequence GPNGVGKS. A Phosphothreonine modification is found at Thr-446.

This sequence belongs to the ABC transporter superfamily. ABCF family. EF3 subfamily. Interacts with LSG1.

It is found in the cytoplasm. The protein resides in the nucleus. It catalyses the reaction ATP + H2O = ADP + phosphate + H(+). In terms of biological role, ATPase that stimulates 40S and 60S ribosome biogenesis. Also involved in ribosome-associated quality control (RQC) pathway, a pathway that mediates ubiquitination and extraction of incompletely synthesized nascent chains for proteasomal degradation: localizes to the ribosomal E-site and stimulates VMS1-dependent tRNA cleavage. The protein is ABC transporter ATP-binding protein ARB1 (ARB1) of Saccharomyces cerevisiae (strain ATCC 204508 / S288c) (Baker's yeast).